The sequence spans 350 residues: Phosphotriesterase-related protein (350 aa).

A divalent metal cation is bound by residues His22, His24, Glu169, His201, His230, and Asp298.

It belongs to the metallo-dependent hydrolases superfamily. Phosphotriesterase family. A divalent metal cation is required as a cofactor.

The protein is Phosphotriesterase-related protein of Drosophila yakuba (Fruit fly).